Here is a 406-residue protein sequence, read N- to C-terminus: Putative nickel insertion protein (406 aa).

This sequence belongs to the LarC family.

In Methanosphaera stadtmanae (strain ATCC 43021 / DSM 3091 / JCM 11832 / MCB-3), this protein is Putative nickel insertion protein.